We begin with the raw amino-acid sequence, 463 residues long: Cysteine--tRNA ligase (463 aa).

Residue Cys33 participates in Zn(2+) binding. The short motif at 35 to 45 (PTVYDFAHIGN) is the 'HIGH' region element. Residues Cys221, His246, and Glu250 each contribute to the Zn(2+) site. The 'KMSKS' region motif lies at 279-283 (KMSKS). ATP is bound at residue Lys282.

Belongs to the class-I aminoacyl-tRNA synthetase family. As to quaternary structure, monomer. Requires Zn(2+) as cofactor.

The protein resides in the cytoplasm. The enzyme catalyses tRNA(Cys) + L-cysteine + ATP = L-cysteinyl-tRNA(Cys) + AMP + diphosphate. In Rhizobium johnstonii (strain DSM 114642 / LMG 32736 / 3841) (Rhizobium leguminosarum bv. viciae), this protein is Cysteine--tRNA ligase.